Here is a 183-residue protein sequence, read N- to C-terminus: MSRKARDPIVLPQGVEVSIQNDEISVKGPKGSLTQVLAKEVEIAVKGNEVFVTPAAHVVDRPGRIQGLYWALIANMVKGVHTGFEKRLEMIGVGFRAAVQGSLLDLSIGVSHPTKMPIPTGLEVSVEKNTLISIKGINKQLVGEFAACVRAKRPPEPYKGKGIRYENEYVRRKAGKAAKTGKK.

The protein belongs to the universal ribosomal protein uL6 family. In terms of assembly, part of the 50S ribosomal subunit.

Its function is as follows. This protein binds to the 23S rRNA, and is important in its secondary structure. It is located near the subunit interface in the base of the L7/L12 stalk, and near the tRNA binding site of the peptidyltransferase center. This Chlamydia trachomatis serovar D (strain ATCC VR-885 / DSM 19411 / UW-3/Cx) protein is Large ribosomal subunit protein uL6.